We begin with the raw amino-acid sequence, 37 residues long: Large ribosomal subunit protein bL36 (37 aa).

Belongs to the bacterial ribosomal protein bL36 family.

The chain is Large ribosomal subunit protein bL36 from Alkaliphilus oremlandii (strain OhILAs) (Clostridium oremlandii (strain OhILAs)).